A 372-amino-acid chain; its full sequence is Delta-type opioid receptor (372 aa).

Topologically, residues 1-47 are extracellular; it reads MEPAPSAGAELQPPLFANASDAYPSACPSAGANASGPPGARSASSLA. Asparagine 18 and asparagine 33 each carry an N-linked (GlcNAc...) asparagine glycan. A helical transmembrane segment spans residues 48–75; sequence LAIAITALYSAVCAVGLLGNVLVMFGIV. Over 76-85 the chain is Cytoplasmic; that stretch reads RYTKMKTATN. A helical transmembrane segment spans residues 86 to 110; the sequence is IYIFNLALADALATSTLPFQSAKYL. The Extracellular portion of the chain corresponds to 111-122; the sequence is METWPFGELLCK. A disulfide bond links cysteine 121 and cysteine 198. A helical transmembrane segment spans residues 123 to 144; sequence AVLSIDYYNMFTSIFTLTMMSV. Residues 145 to 163 are Cytoplasmic-facing; that stretch reads DRYIAVCHPVKALDFRTPA. A helical transmembrane segment spans residues 164–186; that stretch reads KAKLINICIWVLASGVGVPIMVM. Residues 187 to 206 are Extracellular-facing; sequence AVTRPRDGAVVCMLQFPSPS. A helical membrane pass occupies residues 207 to 238; the sequence is WYWDTVTKICVFLFAFVVPILIITVCYGLMLL. At 239–261 the chain is on the cytoplasmic side; sequence RLRSVRLLSGSKEKDRSLRRITR. The chain crosses the membrane as a helical span at residues 262–284; the sequence is MVLVVVGAFVVCWAPIHIFVIVW. Residues 285–299 lie on the Extracellular side of the membrane; that stretch reads TLVDIDRRDPLVVAA. A helical transmembrane segment spans residues 300-321; it reads LHLCIALGYANSSLNPVLYAFL. Topologically, residues 322–372 are cytoplasmic; it reads DENFKRCFRQLCRKPCGRPDPSSFSRAREATARERVTACTPSDGPGGGAAA. A lipid anchor (S-palmitoyl cysteine) is attached at cysteine 333. The disordered stretch occupies residues 340-372; that stretch reads PDPSSFSRAREATARERVTACTPSDGPGGGAAA. Over residues 347 to 357 the composition is skewed to basic and acidic residues; it reads RAREATARERV.

The protein belongs to the G-protein coupled receptor 1 family. May form homooligomers. Forms a heterodimer with OPRM1. Interacts with GPRASP1. Interacts with RTP4; the interaction promotes cell surface localization of the OPRD1-OPRM1 heterodimer. N-glycosylated. In terms of processing, ubiquitinated. A basal ubiquitination seems not to be related to degradation. Ubiquitination is increased upon formation of OPRM1:OPRD1 oligomers leading to proteasomal degradation; the ubiquitination is diminished by RTP4. Detected in oocytes (at protein level). Detected in brain cortex, hypothalamus, hippocampus and olfactory bulb. Detected in oocytes.

The protein localises to the cell membrane. Functionally, G-protein coupled receptor that functions as a receptor for endogenous enkephalins and for a subset of other opioids. Ligand binding causes a conformation change that triggers signaling via guanine nucleotide-binding proteins (G proteins) and modulates the activity of down-stream effectors, such as adenylate cyclase. Signaling leads to the inhibition of adenylate cyclase activity. Inhibits neurotransmitter release by reducing calcium ion currents and increasing potassium ion conductance. Plays a role in the perception of pain and in opiate-mediated analgesia. Plays a role in developing analgesic tolerance to morphine. This Homo sapiens (Human) protein is Delta-type opioid receptor (OPRD1).